The primary structure comprises 154 residues: Transcriptional repressor NrdR (154 aa).

Residues 1–22 form a disordered region; that stretch reads MRCPFCGNDDTQVKDSRPTEDN. A zinc finger spans residues 3-34; the sequence is CPFCGNDDTQVKDSRPTEDNSAIRRRRFCPAC. Residues 11 to 22 are compositionally biased toward basic and acidic residues; that stretch reads TQVKDSRPTEDN. Residues 49–139 enclose the ATP-cone domain; it reads LTVVKSGGSR…VYKDFREVTD (91 aa).

Belongs to the NrdR family. Zn(2+) is required as a cofactor.

In terms of biological role, negatively regulates transcription of bacterial ribonucleotide reductase nrd genes and operons by binding to NrdR-boxes. The polypeptide is Transcriptional repressor NrdR (Rhodospirillum centenum (strain ATCC 51521 / SW)).